A 112-amino-acid polypeptide reads, in one-letter code: Hydrogenase maturation factor HypA (112 aa).

His2 is a binding site for Ni(2+). The Zn(2+) site is built by Cys73, Cys76, Cys88, and Cys91.

Belongs to the HypA/HybF family.

Its function is as follows. Involved in the maturation of [NiFe] hydrogenases. Required for nickel insertion into the metal center of the hydrogenase. This chain is Hydrogenase maturation factor HypA, found in Synechococcus elongatus (strain ATCC 33912 / PCC 7942 / FACHB-805) (Anacystis nidulans R2).